A 234-amino-acid polypeptide reads, in one-letter code: 7-cyano-7-deazaguanine synthase (234 aa).

7-17 (LSGGLDSAVCM) is a binding site for ATP. Cys197, Cys208, Cys211, and Cys214 together coordinate Zn(2+).

This sequence belongs to the QueC family. Zn(2+) is required as a cofactor.

It catalyses the reaction 7-carboxy-7-deazaguanine + NH4(+) + ATP = 7-cyano-7-deazaguanine + ADP + phosphate + H2O + H(+). It participates in purine metabolism; 7-cyano-7-deazaguanine biosynthesis. In terms of biological role, catalyzes the ATP-dependent conversion of 7-carboxy-7-deazaguanine (CDG) to 7-cyano-7-deazaguanine (preQ(0)). This Methanococcus aeolicus (strain ATCC BAA-1280 / DSM 17508 / OCM 812 / Nankai-3) protein is 7-cyano-7-deazaguanine synthase.